The sequence spans 298 residues: MALDFWKSSHAQQWIFDKTEIWKQRAEDMKTYSEEEYSRLNIFWANFITAVATECAHSQANVGCKLRQQVIATAIVYFKRFYLRQSFRDMCPFLVASTALFLACKVEEHTTLSVSSFLKNTALVLPKRWGVAFETNSAKNGVLYDSEFILVEILDCCLVVHHATRPMFELLEDWKQHTLTSTNTPVKDFDQIEIQCQKVVNDTLRCDVGLMFAPHCIGLASISVGMELMGRGEELEDWLVEVDTDMDKLADCINQIYTMYQLWRSFDEKEEVKKLMAKLPKPNTPIPPPQQQQSSYHM.

A Cyclin N-terminal domain is found at 46-162 (NFITAVATEC…ILDCCLVVHH (117 aa)). The disordered stretch occupies residues 278–298 (KLPKPNTPIPPPQQQQSSYHM).

The protein belongs to the cyclin family. Cyclin C subfamily. As to quaternary structure, component of the Mediator complex.

It is found in the nucleus. Functionally, component of the Mediator complex, a coactivator involved in regulated gene transcription of nearly all RNA polymerase II-dependent genes. Mediator functions as a bridge to convey information from gene-specific regulatory proteins to the basal RNA polymerase II transcription machinery. Mediator is recruited to promoters by direct interactions with regulatory proteins and serves as a scaffold for the assembly of a functional preinitiation complex with RNA polymerase II and the general transcription factors. Binds to and activates cyclin-dependent kinase cdk-8 that phosphorylates the CTD (C-terminal domain) of the large subunit of RNA polymerase II (RNAp II), which may inhibit the formation of a transcription initiation complex. The chain is Cyclin-C (cic-1) from Caenorhabditis briggsae.